A 96-amino-acid chain; its full sequence is (4S)-4-hydroxy-5-phosphonooxypentane-2,3-dione isomerase (96 aa).

In terms of domain architecture, ABM spans 2–91; the sequence is HVTLVEINVH…MTGPRKKRLF (90 aa).

This sequence belongs to the LsrG family. In terms of assembly, homodimer.

The protein resides in the cytoplasm. The catalysed reaction is (2S)-2-hydroxy-3,4-dioxopentyl phosphate = 3-hydroxy-2,4-dioxopentyl phosphate. Its function is as follows. Involved in the degradation of phospho-AI-2, thereby terminating induction of the lsr operon and closing the AI-2 signaling cycle. Catalyzes the conversion of (4S)-4-hydroxy-5-phosphonooxypentane-2,3-dione (P-DPD) to 3-hydroxy-5-phosphonooxypentane-2,4-dione (P-HPD). The polypeptide is (4S)-4-hydroxy-5-phosphonooxypentane-2,3-dione isomerase (Shigella flexneri serotype 5b (strain 8401)).